A 692-amino-acid chain; its full sequence is Highly divergent homeobox (692 aa).

Positions 3–63 (LRSVFTVEQQ…NKRRKMSSKS (61 aa)) form a DNA-binding region, homeobox 1. Over residues 117–133 (SSSSKQGTTKHTNTQIT) the composition is skewed to polar residues. Residues 117 to 136 (SSSSKQGTTKHTNTQITEAH) are disordered. Glycyl lysine isopeptide (Lys-Gly) (interchain with G-Cter in SUMO2) cross-links involve residues Lys137, Lys142, Lys146, Lys165, Lys174, Lys196, Lys214, Lys223, and Lys234. Positions 437–500 (ALQDRTQFSD…NRRRKYRLMG (64 aa)) form a DNA-binding region, homeobox 2. 2 disordered regions span residues 505–541 (PPRG…DNDR) and 647–692 (KDQQ…SDSL). A compositionally biased stretch (polar residues) spans 676 to 692 (TSLSVSSLSEKNASDSL).

It localises to the nucleus. The chain is Highly divergent homeobox (Hdx) from Mus musculus (Mouse).